Consider the following 127-residue polypeptide: UPF0102 protein ERGA_CDS_00540 (127 aa).

It belongs to the UPF0102 family.

In Ehrlichia ruminantium (strain Gardel), this protein is UPF0102 protein ERGA_CDS_00540.